We begin with the raw amino-acid sequence, 310 residues long: MEAPPEHCPGVESEQAGKVSACAGCPNQGICSDPNRKVEDPGKALVAESLKDVKNKLLILSGKGGVGKSTVTSLLTRYLARSCPNSNFGVLDIDICGPSQPRLLGALGENVHQSGSGWSPVGIDDNVCLMSIGFLLGSVDDAIIWRGPKKNGMIRQFLSEVDWGNLDLLLLDTPPGTSDEHLSVVSYLKDDTQPESLRAVIVTTPQEVALLDVRKEINFCKKQNIPIVGVIENMSSFRCGNCGNSSEIFPAKTGGAAAMCAEMEVPLLGSLPLDPQIAKACDSGDDITEIKNSTTEALDGICSKIMSSFS.

The [4Fe-4S] cluster site is built by C8, C22, C25, and C31. 62–69 is an ATP binding site; it reads GKGGVGKS. Residues C239 and C242 each coordinate [4Fe-4S] cluster.

This sequence belongs to the Mrp/NBP35 ATP-binding proteins family. NUBP1/NBP35 subfamily. As to quaternary structure, heterotetramer of 2 Nubp1 and 2 Nubp2 chains. [4Fe-4S] cluster is required as a cofactor.

It is found in the cytoplasm. Component of the cytosolic iron-sulfur (Fe/S) protein assembly (CIA) machinery. Required for maturation of extramitochondrial Fe-S proteins. The Nubp1-Nubp2 heterotetramer forms a Fe-S scaffold complex, mediating the de novo assembly of an Fe-S cluster and its transfer to target apoproteins. This is Cytosolic Fe-S cluster assembly factor Nubp1 homolog from Drosophila ananassae (Fruit fly).